An 89-amino-acid chain; its full sequence is UPF0250 protein Bphy_0213 (89 aa).

Belongs to the UPF0250 family.

This is UPF0250 protein Bphy_0213 from Paraburkholderia phymatum (strain DSM 17167 / CIP 108236 / LMG 21445 / STM815) (Burkholderia phymatum).